Here is a 244-residue protein sequence, read N- to C-terminus: rRNA adenine N-6-methyltransferase (244 aa).

S-adenosyl-L-methionine contacts are provided by N11, I13, G38, E59, D84, and N101.

This sequence belongs to the class I-like SAM-binding methyltransferase superfamily. rRNA adenine N(6)-methyltransferase family.

The enzyme catalyses adenosine(2085) in 23S rRNA + 2 S-adenosyl-L-methionine = N(6)-dimethyladenosine(2085) in 23S rRNA + 2 S-adenosyl-L-homocysteine + 2 H(+). Its function is as follows. This protein produces a dimethylation of the adenine residue at position 2085 in 23S rRNA, resulting in reduced affinity between ribosomes and macrolide-lincosamide-streptogramin B antibiotics. This chain is rRNA adenine N-6-methyltransferase (ermC), found in Staphylococcus aureus.